Here is a 1910-residue protein sequence, read N- to C-terminus: A disintegrin and metalloproteinase with thrombospondin motifs 20 (1910 aa).

A signal peptide spans 1 to 21 (MWVAKWLTGLLYHLSLFITRS). A propeptide spanning residues 22 to 253 (WEVDFHPRQE…DERRHSRKKR (232 aa)) is cleaved from the precursor. N-linked (GlcNAc...) asparagine glycans are attached at residues Asn92 and Asn191. Residues 259 to 467 (RYIEIMVTAD…GYGECLLDKP (209 aa)) enclose the Peptidase M12B domain. 11 cysteine pairs are disulfide-bonded: Cys334-Cys387, Cys363-Cys369, Cys381-Cys462, Cys419-Cys446, Cys489-Cys511, Cys500-Cys521, Cys506-Cys540, Cys534-Cys545, Cys568-Cys605, Cys572-Cys610, and Cys583-Cys595. A Zn(2+)-binding site is contributed by His403. The active site involves Glu404. Positions 407 and 413 each coordinate Zn(2+). Asn445 carries N-linked (GlcNAc...) asparagine glycosylation. In terms of domain architecture, Disintegrin spans 468–555 (DEEIYNLPSE…VNKETETRPV (88 aa)). A TSP type-1 1 domain is found at 556-611 (NGEWGPWEPYSSCSRTCGGGIESATRRCNRPEPRNGGNYCVGRRMKFRSCNTDSCP). N-linked (GlcNAc...) asparagine glycans are attached at residues Asn702, Asn717, Asn728, Asn809, and Asn870. Residues 724 to 846 (TGVFNSSHYG…FNIPLEERSD (123 aa)) are spacer. 14 TSP type-1 domains span residues 846–904 (DMFT…NTDC), 905–961 (ELRW…QELC), 966–1023 (VFTR…FSCP), 1024–1073 (SWAA…SPCE), 1076–1135 (TCAS…TPCS), 1152–1206 (KMAQ…DCFT), 1207–1264 (PCGE…AACP), 1304–1356 (RGNQ…QCGP), 1358–1416 (PCPQ…HACP), 1417–1475 (ADVS…VRCP), 1476–1531 (SWKA…QDCV), 1535–1588 (GMER…NPPC), 1589–1652 (NYIV…INSC), and 1654–1710 (HLAT…NDCK). Asn1061 carries an N-linked (GlcNAc...) asparagine glycan. An N-linked (GlcNAc...) asparagine glycan is attached at Asn1456. N-linked (GlcNAc...) asparagine glycosylation is found at Asn1542 and Asn1572. Residues 1711 to 1910 (SFTTCKEIQV…MTTGLPIQVI (200 aa)) enclose the GON domain. N-linked (GlcNAc...) asparagine glycans are attached at residues Asn1763, Asn1781, and Asn1852.

Zn(2+) serves as cofactor. The precursor is cleaved by a furin endopeptidase. In terms of processing, glycosylated. Can be O-fucosylated by POFUT2 on a serine or a threonine residue found within the consensus sequence C1-X(2)-(S/T)-C2-G of the TSP type-1 repeat domains where C1 and C2 are the first and second cysteine residue of the repeat, respectively. Fucosylated repeats can then be further glycosylated by the addition of a beta-1,3-glucose residue by the glucosyltransferase, B3GALTL. Fucosylation mediates the efficient secretion of ADAMTS family members. Can also be C-glycosylated with one or two mannose molecules on tryptophan residues within the consensus sequence W-X-X-W of the TPRs, and N-glycosylated. These other glycosylations can also facilitate secretion. Very sparingly expressed, although is detected at low levels in testis, prostate, ovary, heart, placenta, lung and pancreas. Overexpressed in several brain, colon and breast carcinomas.

It localises to the secreted. It is found in the extracellular space. Its subcellular location is the extracellular matrix. Its function is as follows. May play a role in tissue-remodeling process occurring in both normal and pathological conditions. May have a protease-independent function in the transport from the endoplasmic reticulum to the Golgi apparatus of secretory cargos, mediated by the GON domain. In Homo sapiens (Human), this protein is A disintegrin and metalloproteinase with thrombospondin motifs 20 (ADAMTS20).